The following is a 177-amino-acid chain: Probable adenylyl-sulfate kinase (177 aa).

12 to 19 (GLSGAGKT) is a binding site for ATP. Catalysis depends on Ser-86, which acts as the Phosphoserine intermediate.

This sequence belongs to the APS kinase family.

It carries out the reaction adenosine 5'-phosphosulfate + ATP = 3'-phosphoadenylyl sulfate + ADP + H(+). It participates in sulfur metabolism; hydrogen sulfide biosynthesis; sulfite from sulfate: step 2/3. In terms of biological role, catalyzes the synthesis of activated sulfate. The protein is Probable adenylyl-sulfate kinase (cysC) of Synechocystis sp. (strain ATCC 27184 / PCC 6803 / Kazusa).